We begin with the raw amino-acid sequence, 196 residues long: ECF RNA polymerase sigma factor SigM (196 aa).

The sigma-70 factor domain-2 stretch occupies residues 39–105; that stretch reads LFRRHHRQLH…ACLDRLRRAK (67 aa). The Polymerase core binding motif lies at 63–66; the sequence is DALQ. Positions 130–181 are sigma-70 factor domain-4; that stretch reads AVQRALMRLPVEQRAAVVAVDMQGYSIADTARMLGVAEGTVKSRCARARARL. The H-T-H motif DNA-binding region spans 156–175; it reads IADTARMLGVAEGTVKSRCA.

It belongs to the sigma-70 factor family. ECF subfamily. Interacts transiently with the RNA polymerase catalytic core formed by RpoA, RpoB, RpoC and RpoZ (2 alpha, 1 beta, 1 beta' and 1 omega subunit) to form the RNA polymerase holoenzyme that can initiate transcription. Interacts (via sigma-70 factor domain-4) with anti-sigma-M factor RsmA (AC L7N5D7).

Sigma factors are initiation factors that promote the attachment of RNA polymerase to specific initiation sites and are then released. Extracytoplasmic function (ECF) sigma factors are held in an inactive form by an anti-sigma factor (RsaM, AC L7N5D7) until released by regulated intramembrane proteolysis. This sigma factor is required for the synthesis of surface or secreted molecules. The chain is ECF RNA polymerase sigma factor SigM (sigM) from Mycobacterium tuberculosis (strain ATCC 25618 / H37Rv).